A 337-amino-acid polypeptide reads, in one-letter code: Heat-inducible transcription repressor HrcA (337 aa).

It belongs to the HrcA family.

In terms of biological role, negative regulator of class I heat shock genes (grpE-dnaK-dnaJ and groELS operons). Prevents heat-shock induction of these operons. The polypeptide is Heat-inducible transcription repressor HrcA (Nocardioides sp. (strain ATCC BAA-499 / JS614)).